Reading from the N-terminus, the 444-residue chain is Probable ribonuclease FAU-1 (444 aa).

This sequence belongs to the FAU-1 family.

Its function is as follows. Probable RNase involved in rRNA stability through maturation and/or degradation of precursor rRNAs. Binds to RNA in loop regions with AU-rich sequences. The chain is Probable ribonuclease FAU-1 from Pyrobaculum arsenaticum (strain DSM 13514 / JCM 11321 / PZ6).